The primary structure comprises 286 residues: Ribosomal RNA small subunit methyltransferase A (286 aa).

Positions 28, 30, 55, 77, 103, and 123 each coordinate S-adenosyl-L-methionine.

This sequence belongs to the class I-like SAM-binding methyltransferase superfamily. rRNA adenine N(6)-methyltransferase family. RsmA subfamily.

The protein resides in the cytoplasm. It catalyses the reaction adenosine(1518)/adenosine(1519) in 16S rRNA + 4 S-adenosyl-L-methionine = N(6)-dimethyladenosine(1518)/N(6)-dimethyladenosine(1519) in 16S rRNA + 4 S-adenosyl-L-homocysteine + 4 H(+). Its function is as follows. Specifically dimethylates two adjacent adenosines (A1518 and A1519) in the loop of a conserved hairpin near the 3'-end of 16S rRNA in the 30S particle. May play a critical role in biogenesis of 30S subunits. The protein is Ribosomal RNA small subunit methyltransferase A of Bradyrhizobium sp. (strain ORS 278).